The sequence spans 566 residues: Arginine--tRNA ligase (566 aa).

Residues 121 to 131 carry the 'HIGH' region motif; sequence ANPNGPFHIGH.

It belongs to the class-I aminoacyl-tRNA synthetase family.

It localises to the cytoplasm. The catalysed reaction is tRNA(Arg) + L-arginine + ATP = L-arginyl-tRNA(Arg) + AMP + diphosphate. This is Arginine--tRNA ligase from Methanococcus maripaludis (strain C7 / ATCC BAA-1331).